Reading from the N-terminus, the 226-residue chain is Large ribosomal subunit protein uL1 (226 aa).

It belongs to the universal ribosomal protein uL1 family. In terms of assembly, part of the 50S ribosomal subunit.

Functionally, binds directly to 23S rRNA. The L1 stalk is quite mobile in the ribosome, and is involved in E site tRNA release. In terms of biological role, protein L1 is also a translational repressor protein, it controls the translation of the L11 operon by binding to its mRNA. This Borreliella afzelii (strain PKo) (Borrelia afzelii) protein is Large ribosomal subunit protein uL1.